Here is a 344-residue protein sequence, read N- to C-terminus: Heat-inducible transcription repressor HrcA (344 aa).

This sequence belongs to the HrcA family.

Negative regulator of class I heat shock genes (grpE-dnaK-dnaJ and groELS operons). Prevents heat-shock induction of these operons. This is Heat-inducible transcription repressor HrcA from Desulforudis audaxviator (strain MP104C).